Reading from the N-terminus, the 146-residue chain is 3-dehydroquinate dehydratase (146 aa).

Catalysis depends on tyrosine 22, which acts as the Proton acceptor. Substrate-binding residues include asparagine 74, histidine 80, and aspartate 87. The active-site Proton donor is histidine 100. Residues 101–102 and arginine 111 contribute to the substrate site; that span reads LS.

It belongs to the type-II 3-dehydroquinase family. As to quaternary structure, homododecamer.

It carries out the reaction 3-dehydroquinate = 3-dehydroshikimate + H2O. The protein operates within metabolic intermediate biosynthesis; chorismate biosynthesis; chorismate from D-erythrose 4-phosphate and phosphoenolpyruvate: step 3/7. Catalyzes a trans-dehydration via an enolate intermediate. The sequence is that of 3-dehydroquinate dehydratase from Clostridium perfringens (strain SM101 / Type A).